A 636-amino-acid chain; its full sequence is Beta-galactosidase-1-like protein 2 (636 aa).

Positions 1-32 are cleaved as a signal peptide; it reads MTTWSLRRRPARTLGLLLLVVLGFLVLRRLDW. The active-site Proton donor is Glu201. Residue Glu277 is the Nucleophile of the active site.

This sequence belongs to the glycosyl hydrolase 35 family.

It localises to the secreted. In Homo sapiens (Human), this protein is Beta-galactosidase-1-like protein 2 (GLB1L2).